A 545-amino-acid chain; its full sequence is Methionine--tRNA ligase (545 aa).

Positions 13-23 (PYANGPLHIGH) match the 'HIGH' region motif. The Zn(2+) site is built by Cys144, Cys147, Cys157, and Cys160. Residues 330–334 (KISKS) carry the 'KMSKS' region motif. Residue Lys333 participates in ATP binding.

It belongs to the class-I aminoacyl-tRNA synthetase family. MetG type 1 subfamily. As to quaternary structure, monomer. Zn(2+) serves as cofactor.

The protein localises to the cytoplasm. It catalyses the reaction tRNA(Met) + L-methionine + ATP = L-methionyl-tRNA(Met) + AMP + diphosphate. Is required not only for elongation of protein synthesis but also for the initiation of all mRNA translation through initiator tRNA(fMet) aminoacylation. The polypeptide is Methionine--tRNA ligase (Blochmanniella floridana).